A 355-amino-acid chain; its full sequence is Tetraacyldisaccharide 4'-kinase (355 aa).

54–61 (TVGGAGKT) lines the ATP pocket.

The protein belongs to the LpxK family.

The enzyme catalyses a lipid A disaccharide + ATP = a lipid IVA + ADP + H(+). It participates in glycolipid biosynthesis; lipid IV(A) biosynthesis; lipid IV(A) from (3R)-3-hydroxytetradecanoyl-[acyl-carrier-protein] and UDP-N-acetyl-alpha-D-glucosamine: step 6/6. Its function is as follows. Transfers the gamma-phosphate of ATP to the 4'-position of a tetraacyldisaccharide 1-phosphate intermediate (termed DS-1-P) to form tetraacyldisaccharide 1,4'-bis-phosphate (lipid IVA). This chain is Tetraacyldisaccharide 4'-kinase, found in Rhizobium rhizogenes (strain K84 / ATCC BAA-868) (Agrobacterium radiobacter).